Reading from the N-terminus, the 225-residue chain is MARMKARSAKGKRVAKDTWKSKVWYDIYTPQSFGGDVIGQTPANDPANLIGRISEISLRDLTNEHSKHMTRMYFKVDGVSGNNATSQFVGHDTTREYLKSQVRRRRSKINAIVEVRTKDGFKVRVKALVLTAVRARDHHKTEIRVRMEQIIKEMAKETPFAEFVHAMLMGGLGSKIYGDCKKMFPLKRVEIFKSEVIEFGKAAEAPVEEAAAEEVVEEAAAETQE.

It belongs to the eukaryotic ribosomal protein eS1 family.

The protein is Small ribosomal subunit protein eS1 of Methanococcus maripaludis (strain DSM 14266 / JCM 13030 / NBRC 101832 / S2 / LL).